Reading from the N-terminus, the 307-residue chain is Barttin (307 aa).

Residues 1–5 (MADEK) are Cytoplasmic-facing. Residues 1 to 72 (MADEKTFRIG…VPADSDFQGI (72 aa)) are regulates channel membrane trafficking and anion conductance. Residues 6–26 (TFRIGFIVLGLFLLSLGTFLM) traverse the membrane as a helical segment. Over 27–32 (SHDRPQ) the chain is Extracellular. A helical transmembrane segment spans residues 33 to 53 (VYGTFYAMGSVMVIGGVIWSM). S-palmitoyl cysteine attachment occurs at residues cysteine 54 and cysteine 56. Residues 54–307 (CQCYPKITFV…ELGFEPDIQG (254 aa)) lie on the Cytoplasmic side of the membrane. A phosphoserine mark is found at serine 79 and serine 107. 2 disordered regions span residues 135 to 154 (TGAS…WMEA) and 161 to 224 (GSDE…RGPL). Positions 161–171 (GSDENEGEKSH) are enriched in basic and acidic residues. Serine 162 carries the phosphoserine modification. The segment covering 172–183 (SQSSPSVGPQGS) has biased composition (low complexity). A compositionally biased stretch (polar residues) spans 198-207 (SEGSSLQPSP). Residues serine 228 and serine 289 each carry the phosphoserine modification. The interval 255-307 (RKQQWSLRMKGETVQARAEEPEQEEEDLYYGLPDSPGNPLPDKELGFEPDIQG) is disordered.

As to quaternary structure, interacts with CLCNK channels. Forms probably heteromers with CLCNKA in the thin ascending limb of Henle and with CLCNKB in the thick ascending limb and more distal segments. Post-translationally, palmitoylation is necessary for activation of plasma membrane-inserted CLC-K/barttin channels. As to expression, expression is evident in inner and outer stripes of the outer medulla of the kidney, most probably representing thin limbs of Henle's loop together with some collecting duct coursing through the outer stripe. In situ hybridization in fetal kidney at 18.5 dpc revealed a clear continuity between hybridization signals from the thin limb of Henle's loop and the distal convoluted tubule, suggesting that part of the expression pattern may result from expression in the thick ascending limb of Henle's loop. In addition, strong signals are present in a subset of cortical tubules, representing distal convoluted tubules or cortical collecting duct. Strong expression is also observed in the inner medulla of the kidney. This expression does not extend all the way to the tip of the papilla. Thus this signal most probably represents cells of the thin ascending limbs. In the inner ear, strong and exclusive expression is detected in marginal cells of the stria vascularis. In addition to cochlear signal, expression is observed in dark cells localized at the base of the crista ampullaris of the vestibular organ.

Its subcellular location is the basolateral cell membrane. Regulatory subunit of anion-selective CLCNKA:BSND and CLCNKB:BSND heteromeric channels involved in basolateral chloride conductance along the nephron to achieve urine concentration and maintain systemic acid-base homeostasis, and in the stria vascularis of the inner ear to establish the endocochlear potential necessary for normal hearing. Most likely acts as a chaperone that allosterically regulates proper sorting of CLCNKA:BSND and CLCNKB:BSND channels at the basolateral plasma membrane domain and functional switch to ion conducting state. Mediates constitutive opening of channel common gates. In Mus musculus (Mouse), this protein is Barttin.